A 451-amino-acid polypeptide reads, in one-letter code: Phosphoglucosamine mutase (451 aa).

Ser-102 functions as the Phosphoserine intermediate in the catalytic mechanism. Mg(2+) contacts are provided by Ser-102, Asp-243, Asp-245, and Asp-247. Ser-102 bears the Phosphoserine mark.

The protein belongs to the phosphohexose mutase family. It depends on Mg(2+) as a cofactor. Activated by phosphorylation.

It catalyses the reaction alpha-D-glucosamine 1-phosphate = D-glucosamine 6-phosphate. In terms of biological role, catalyzes the conversion of glucosamine-6-phosphate to glucosamine-1-phosphate. The polypeptide is Phosphoglucosamine mutase (Brucella abortus (strain 2308)).